Consider the following 367-residue polypeptide: MTASRRTLMVMAGGTGGHVFPGLAVAHRMEAAGWRVVWLGNPAGMEATLVPKHGIPMEYVRFGGLRGKGLKTKLTLPFNLLRACWQSLGALRRVRPDVVLGMGGYITFPAGVMTALSGRPLVLHEQNSIAGLANKVLAKFAKRVLVAFPDALPHAEWTGNPIRAELARTEAPKARYASRSGPLHVLVVGGSLGAAALNEVVPRALALLAPGERPRIVHQAGAKHIDALKANYEAAGFAGGDDVRLVPFIDDMASAYAAADLVICRSGAMTVSEIAAVGVAALFVPFPYAVDDHQTTNAAFLADAGAAVLVQQRDLSAQLLADWLRGQSRASLAAMAERSRSLAKPEATDEVARVCAKVAGANLEQLQ.

UDP-N-acetyl-alpha-D-glucosamine is bound by residues 15–17 (TGG), Asn-127, Arg-163, Ser-191, Ile-249, and Gln-294.

The protein belongs to the glycosyltransferase 28 family. MurG subfamily.

It localises to the cell inner membrane. The enzyme catalyses di-trans,octa-cis-undecaprenyl diphospho-N-acetyl-alpha-D-muramoyl-L-alanyl-D-glutamyl-meso-2,6-diaminopimeloyl-D-alanyl-D-alanine + UDP-N-acetyl-alpha-D-glucosamine = di-trans,octa-cis-undecaprenyl diphospho-[N-acetyl-alpha-D-glucosaminyl-(1-&gt;4)]-N-acetyl-alpha-D-muramoyl-L-alanyl-D-glutamyl-meso-2,6-diaminopimeloyl-D-alanyl-D-alanine + UDP + H(+). The protein operates within cell wall biogenesis; peptidoglycan biosynthesis. Functionally, cell wall formation. Catalyzes the transfer of a GlcNAc subunit on undecaprenyl-pyrophosphoryl-MurNAc-pentapeptide (lipid intermediate I) to form undecaprenyl-pyrophosphoryl-MurNAc-(pentapeptide)GlcNAc (lipid intermediate II). The sequence is that of UDP-N-acetylglucosamine--N-acetylmuramyl-(pentapeptide) pyrophosphoryl-undecaprenol N-acetylglucosamine transferase from Burkholderia vietnamiensis (strain G4 / LMG 22486) (Burkholderia cepacia (strain R1808)).